The chain runs to 286 residues: Pyridoxine 4-dehydrogenase (286 aa).

Tyr59 acts as the Proton donor in catalysis. An NADP(+)-binding site is contributed by 210 to 218 (FPLGGFTPL).

It belongs to the aldo/keto reductase family. Aldo/keto reductase 2 subfamily.

It catalyses the reaction pyridoxine + NADP(+) = pyridoxal + NADPH + H(+). The catalysed reaction is pyridoxine + NAD(+) = pyridoxal + NADH + H(+). Functionally, catalyzes the NAD(P)H-dependent reduction of pyridoxal to pyridoxine in vitro. Is not able to reduce 4-pyridoxate, and to oxidize pyridoxine or pyridoxamine. Has Kemp eliminase activity towards the non-physiological substrate 5-nitrobenzisoxazole, producing 4-nitro-2-cyanophenol; this activity is not considered to be physiologically relevant. In Escherichia coli (strain K12), this protein is Pyridoxine 4-dehydrogenase.